Reading from the N-terminus, the 104-residue chain is Replication restart protein PriB (104 aa).

The SSB domain occupies 1–101 (MTNRLELSGI…LHAEQIELID (101 aa)).

The protein belongs to the PriB family. As to quaternary structure, homodimer. Interacts with DnaT. Interacts with PriA. Component of the replication restart primosome. Primosome assembly occurs via a 'hand-off' mechanism. PriA binds to replication forks, subsequently PriB then DnaT bind; DnaT then displaces ssDNA to generate the helicase loading substrate.

In terms of biological role, involved in the restart of stalled replication forks, which reloads the replicative helicase on sites far from the origin of replication; the PriA-PriB pathway is the major replication restart pathway. During primosome assembly it facilitates complex formation between PriA and DnaT on DNA; stabilizes PriA on DNA. Stimulates the DNA unwinding activity of PriA helicase. Functionally, binds single-stranded (ss)DNA at the primosome assembly site (PAS). One study finds it binds 15 nucleotide (nt) ssDNA. Another study finds the minimal ssDNA length for binding to PriB is 25 nt; prefers dT(30) over dA(30). Also binds 22 nt dsDNA. In Klebsiella pneumoniae subsp. pneumoniae (strain ATCC 700721 / MGH 78578), this protein is Replication restart protein PriB.